The following is a 271-amino-acid chain: Ubiquitin thioesterase OTUB1 (271 aa).

Ala-2 carries the N-acetylalanine modification. Ser-16 bears the Phosphoserine mark. Phosphotyrosine; by SRC is present on Tyr-26. The region spanning 80 to 271 (SYIRKTRPDG…RPGHYDILYK (192 aa)) is the OTU domain. Asp-88 is a catalytic residue. Cys-91 (nucleophile) is an active-site residue. Ubiquitin-conjugating enzyme E2 binding regions lie at residues 130-138 (FTEFTIEDF) and 169-177 (DYLVVYLRL). Residues 189–195 (FFEHFIE) are free ubiquitin binding. The ubiquitin-conjugating enzyme E2 binding stretch occupies residues 206 to 213 (QEVEPMCK). Free ubiquitin binding stretches follow at residues 214-221 (ESDHIHII) and 245-251 (NPHIFPE). His-265 is an active-site residue.

This sequence belongs to the peptidase C65 family. Interacts with FUS and RACK1. Interacts with UBE2D1/UBCH5A, UBE2W/UBC16 and UBE2N/UBC13. In terms of assembly, interacts with RNF128. Forms a ternary complex with RNF128 and USP8. Interacts with the C-terminal UCH catalytic domain of USP8. As to quaternary structure, interacts with RNF128. Does not associate with USP8. Phosphorylation at Tyr-26 by SRC and SRMS promotes deubiquitination of RPTOR via a non-catalytic process. As to expression, isoform 1 is ubiquitous. Isoform 2 is expressed only in lymphoid tissues such as tonsils, lymph nodes and spleen, as well as peripheral blood mononuclear cells.

It localises to the cytoplasm. It carries out the reaction Thiol-dependent hydrolysis of ester, thioester, amide, peptide and isopeptide bonds formed by the C-terminal Gly of ubiquitin (a 76-residue protein attached to proteins as an intracellular targeting signal).. By free ubiquitin: binding of free ubiquitin triggers conformational changes in the OTU domain and formation of a ubiquitin-binding helix in the N-terminus, promoting binding of the conjugated donor ubiquitin in UBE2N/UBC13 to OTUB1. Hydrolase that can specifically remove 'Lys-48'-linked conjugated ubiquitin from proteins and plays an important regulatory role at the level of protein turnover by preventing degradation. Regulator of T-cell anergy, a phenomenon that occurs when T-cells are rendered unresponsive to antigen rechallenge and no longer respond to their cognate antigen. Acts via its interaction with RNF128/GRAIL, a crucial inductor of CD4 T-cell anergy. Isoform 1 destabilizes RNF128, leading to prevent anergy. In contrast, isoform 2 stabilizes RNF128 and promotes anergy. Surprisingly, it regulates RNF128-mediated ubiquitination, but does not deubiquitinate polyubiquitinated RNF128. Deubiquitinates estrogen receptor alpha (ESR1). Mediates deubiquitination of 'Lys-48'-linked polyubiquitin chains, but not 'Lys-63'-linked polyubiquitin chains. Not able to cleave di-ubiquitin. Also capable of removing NEDD8 from NEDD8 conjugates, but with a much lower preference compared to 'Lys-48'-linked ubiquitin. Functionally, plays a key non-catalytic role in DNA repair regulation by inhibiting activity of RNF168, an E3 ubiquitin-protein ligase that promotes accumulation of 'Lys-63'-linked histone H2A and H2AX at DNA damage sites. Inhibits RNF168 independently of ubiquitin thioesterase activity by binding and inhibiting UBE2N/UBC13, the E2 partner of RNF168, thereby limiting spreading of 'Lys-63'-linked histone H2A and H2AX marks. Inhibition occurs by binding to free ubiquitin: free ubiquitin acts as an allosteric regulator that increases affinity for UBE2N/UBC13 and disrupts interaction with UBE2V1. The OTUB1-UBE2N/UBC13-free ubiquitin complex adopts a configuration that mimics a cleaved 'Lys48'-linked di-ubiquitin chain. Acts as a regulator of mTORC1 and mTORC2 complexes. When phosphorylated at Tyr-26, acts as an activator of the mTORC1 complex by mediating deubiquitination of RPTOR via a non-catalytic process: acts by binding and inhibiting the activity of the ubiquitin-conjugating enzyme E2 (UBE2D1/UBCH5A, UBE2W/UBC16 and UBE2N/UBC13), thereby preventing ubiquitination of RPTOR. Can also act as an inhibitor of the mTORC1 and mTORC2 complexes in response to amino acids by mediating non-catalytic deubiquitination of DEPTOR. This chain is Ubiquitin thioesterase OTUB1 (OTUB1), found in Homo sapiens (Human).